We begin with the raw amino-acid sequence, 219 residues long: Large ribosomal subunit protein uL1 (219 aa).

It belongs to the universal ribosomal protein uL1 family. As to quaternary structure, component of the large ribosomal subunit.

The protein localises to the cytoplasm. The sequence is that of Large ribosomal subunit protein uL1 (RPL1) from Encephalitozoon cuniculi (strain GB-M1) (Microsporidian parasite).